The following is a 332-amino-acid chain: Small ribosomal subunit protein uS2 (332 aa).

It belongs to the universal ribosomal protein uS2 family.

This chain is Small ribosomal subunit protein uS2, found in Afipia carboxidovorans (strain ATCC 49405 / DSM 1227 / KCTC 32145 / OM5) (Oligotropha carboxidovorans).